A 37-amino-acid polypeptide reads, in one-letter code: U1-theraphotoxin-Hs1b (37 aa).

Intrachain disulfides connect Cys-4/Cys-18, Cys-8/Cys-29, and Cys-23/Cys-34.

Form 1 and form 2 may dimerize. In terms of tissue distribution, expressed by the venom gland.

Its subcellular location is the secreted. In terms of biological role, lethal neurotoxin that blocks neuromuscular transmission. Acts cooperatively to potentiate the activity of huwentoxin-I. The chain is U1-theraphotoxin-Hs1b from Cyriopagopus schmidti (Chinese bird spider).